A 405-amino-acid polypeptide reads, in one-letter code: Imidazolonepropionase (405 aa).

H70 and H72 together coordinate Fe(3+). Zn(2+) contacts are provided by H70 and H72. 4-imidazolone-5-propanoate is bound by residues R79, Y142, and H175. Y142 contacts N-formimidoyl-L-glutamate. H240 serves as a coordination point for Fe(3+). H240 is a Zn(2+) binding site. Q243 contributes to the 4-imidazolone-5-propanoate binding site. D315 serves as a coordination point for Fe(3+). D315 contributes to the Zn(2+) binding site. N317 and G319 together coordinate N-formimidoyl-L-glutamate. Position 320 (S320) interacts with 4-imidazolone-5-propanoate.

The protein belongs to the metallo-dependent hydrolases superfamily. HutI family. Zn(2+) is required as a cofactor. The cofactor is Fe(3+).

Its subcellular location is the cytoplasm. It carries out the reaction 4-imidazolone-5-propanoate + H2O = N-formimidoyl-L-glutamate. Its pathway is amino-acid degradation; L-histidine degradation into L-glutamate; N-formimidoyl-L-glutamate from L-histidine: step 3/3. In terms of biological role, catalyzes the hydrolytic cleavage of the carbon-nitrogen bond in imidazolone-5-propanoate to yield N-formimidoyl-L-glutamate. It is the third step in the universal histidine degradation pathway. This chain is Imidazolonepropionase, found in Ruegeria sp. (strain TM1040) (Silicibacter sp.).